The primary structure comprises 70 residues: Large ribosomal subunit protein bL31 (70 aa).

The Zn(2+) site is built by cysteine 16, cysteine 18, cysteine 37, and cysteine 40.

Belongs to the bacterial ribosomal protein bL31 family. Type A subfamily. Part of the 50S ribosomal subunit. It depends on Zn(2+) as a cofactor.

Binds the 23S rRNA. The protein is Large ribosomal subunit protein bL31 of Shewanella amazonensis (strain ATCC BAA-1098 / SB2B).